A 741-amino-acid polypeptide reads, in one-letter code: Protein O-mannosyl-transferase TMTC4 (741 aa).

Residues 1-10 (MVELDADLDH) lie on the Cytoplasmic side of the membrane. A helical transmembrane segment spans residues 11-31 (IVPSVLPPFWAKLVVGFVSLL). The Extracellular segment spans residues 32-110 (CFARSYDGDF…FHPVGFHVVN (79 aa)). Asn77 is a glycosylation site (N-linked (GlcNAc...) asparagine). A helical membrane pass occupies residues 111–131 (ILLHGSISILMLDVFSVLFGG). Residues 132–146 (LQYTGKGQRVHLAPR) are Cytoplasmic-facing. 2 helical membrane passes run 147 to 166 (ASLLATLLFAVHPVHTECVA) and 167 to 185 (GVVGRADLLCALFFLLSFL). Residues 186–198 (GYCQAFKETGNKE) are Cytoplasmic-facing. The chain crosses the membrane as a helical span at residues 199-219 (GTHSSTFWVLLSIFLGAVAML). Residues 220–224 (CKEQG) lie on the Extracellular side of the membrane. A helical transmembrane segment spans residues 225-245 (ITVLGLNAVFDILVIGKLDIL). Residues 246 to 265 (AAVRKVLHKDKSQENAGMFK) lie on the Cytoplasmic side of the membrane. The helical transmembrane segment at 266–286 (NGGLLFRIALLTIGGTSMLYI) threads the bilayer. Residues 287-354 (RWKIMGTGPP…PLIKSVGDWR (68 aa)) lie on the Extracellular side of the membrane. The chain crosses the membrane as a helical span at residues 355-375 (VIALAALWLCLIGLIFQALCS). Residues 376-382 (EDSCKRR) are Cytoplasmic-facing. The helical transmembrane segment at 383-403 (ILTLGLGFLVIPFLPASNLFF) threads the bilayer. Residues 404 to 412 (RVGFVVAER) are Extracellular-facing. Residues 413 to 433 (VLYLPSAGYCVLLTFGFGALS) traverse the membrane as a helical segment. The Cytoplasmic portion of the chain corresponds to 434–441 (RHTKKKKP). The chain crosses the membrane as a helical span at residues 442–462 (VAAIILGILLINALRCVIRSG). Residues 463-741 (EWRSEEQLFR…KLEQTQKKDV (279 aa)) are Extracellular-facing. TPR repeat units follow at residues 482–515 (AKVHYNIGKNLADQGNQTAAIKYYREAVRLNPKY), 516–549 (VHAMNNLGNILKERNELQEAEELLSLAVQIQPDF), 550–583 (AAAWMNLGIVQNSLKRFEEAEQSYRTAIKHRRKY), 584–617 (PDCYYNLGRLYADLNRHVDALNAWRNATVLKPEH), 618–651 (SLAWNNMIILLDNTGNLAQAEAVGREALQLIPND), 652–685 (HSLMFSLANVLGKSQKYKESEALFLKAIKANPNV), and 686–719 (ASYHGNLAVLYHRWGHLDSAKKHYEISLQLDPVA). An N-linked (GlcNAc...) asparagine glycan is attached at Asn497. Asn609 carries N-linked (GlcNAc...) asparagine glycosylation. Asn725 is a glycosylation site (N-linked (GlcNAc...) asparagine).

It belongs to the TMTC family.

It localises to the membrane. The protein resides in the endoplasmic reticulum. It catalyses the reaction a di-trans,poly-cis-dolichyl beta-D-mannosyl phosphate + L-seryl-[protein] = 3-O-(alpha-D-mannosyl)-L-seryl-[protein] + a di-trans,poly-cis-dolichyl phosphate + H(+). The catalysed reaction is a di-trans,poly-cis-dolichyl beta-D-mannosyl phosphate + L-threonyl-[protein] = 3-O-(alpha-D-mannosyl)-L-threonyl-[protein] + a di-trans,poly-cis-dolichyl phosphate + H(+). Its pathway is protein modification; protein glycosylation. Transfers mannosyl residues to the hydroxyl group of serine or threonine residues. The 4 members of the TMTC family are O-mannosyl-transferases dedicated primarily to the cadherin superfamily, each member seems to have a distinct role in decorating the cadherin domains with O-linked mannose glycans at specific regions. Also acts as O-mannosyl-transferase on other proteins such as PDIA3. This Mus musculus (Mouse) protein is Protein O-mannosyl-transferase TMTC4.